The chain runs to 170 residues: Adenine phosphoribosyltransferase (170 aa).

The protein belongs to the purine/pyrimidine phosphoribosyltransferase family. In terms of assembly, homodimer.

The protein resides in the cytoplasm. The catalysed reaction is AMP + diphosphate = 5-phospho-alpha-D-ribose 1-diphosphate + adenine. The protein operates within purine metabolism; AMP biosynthesis via salvage pathway; AMP from adenine: step 1/1. In terms of biological role, catalyzes a salvage reaction resulting in the formation of AMP, that is energically less costly than de novo synthesis. This Prochlorococcus marinus (strain AS9601) protein is Adenine phosphoribosyltransferase.